The following is a 159-amino-acid chain: Transcriptional repressor NrdR (159 aa).

The segment at 3-34 is a zinc-finger region; sequence CPFCRHEDTQVVDSRVSEDGAAIRRRRRCSAC. Residues 49–139 enclose the ATP-cone domain; it reads PAVVKKDGSR…VYRRFEDVSE (91 aa).

This sequence belongs to the NrdR family. The cofactor is Zn(2+).

Its function is as follows. Negatively regulates transcription of bacterial ribonucleotide reductase nrd genes and operons by binding to NrdR-boxes. This is Transcriptional repressor NrdR from Burkholderia vietnamiensis (strain G4 / LMG 22486) (Burkholderia cepacia (strain R1808)).